Consider the following 103-residue polypeptide: Large ribosomal subunit protein uL24 (103 aa).

Belongs to the universal ribosomal protein uL24 family. As to quaternary structure, part of the 50S ribosomal subunit.

One of two assembly initiator proteins, it binds directly to the 5'-end of the 23S rRNA, where it nucleates assembly of the 50S subunit. Functionally, one of the proteins that surrounds the polypeptide exit tunnel on the outside of the subunit. In Pasteurella multocida (strain Pm70), this protein is Large ribosomal subunit protein uL24.